The sequence spans 525 residues: Polyamine aminopropyltransferase 1 (525 aa).

Transmembrane regions (helical) follow at residues Ala21 to Ala41, Ile53 to Val73, Leu89 to Ala109, Leu117 to Val137, Val155 to Ala175, and Leu180 to Trp200. The 245-residue stretch at Ala220–Pro464 folds into the PABS domain. The tract at residues Met222–Pro471 is spermidine synthase. S-methyl-5'-thioadenosine is bound at residue Gln259. Residues His289 and Asp313 each coordinate spermidine. S-methyl-5'-thioadenosine-binding positions include Asp333 and Asp367–Ala368. Asp385 (proton acceptor) is an active-site residue.

The protein belongs to the spermidine/spermine synthase family. Homodimer or homotetramer.

The protein localises to the cell membrane. It catalyses the reaction S-adenosyl 3-(methylsulfanyl)propylamine + putrescine = S-methyl-5'-thioadenosine + spermidine + H(+). It functions in the pathway amine and polyamine biosynthesis; spermidine biosynthesis; spermidine from putrescine: step 1/1. Catalyzes the irreversible transfer of a propylamine group from the amino donor S-adenosylmethioninamine (decarboxy-AdoMet) to putrescine (1,4-diaminobutane) to yield spermidine. The chain is Polyamine aminopropyltransferase 1 from Ralstonia nicotianae (strain ATCC BAA-1114 / GMI1000) (Ralstonia solanacearum).